Consider the following 164-residue polypeptide: Large ribosomal subunit protein uL15 (164 aa).

The segment at 1 to 52 (MSLSKLKAPKGANRERTRVGRGQGSGLGKTAGRGGKGQKARSGNMHFEGFEG) is disordered. Gly residues predominate over residues 21 to 37 (RGQGSGLGKTAGRGGKG).

This sequence belongs to the universal ribosomal protein uL15 family. Part of the 50S ribosomal subunit.

Its function is as follows. Binds to the 23S rRNA. The sequence is that of Large ribosomal subunit protein uL15 from Anaeromyxobacter sp. (strain Fw109-5).